Consider the following 455-residue polypeptide: Bifunctional protein GlmU (455 aa).

The tract at residues 1 to 228 (MNNTLTTIIL…EFEIEGVNNR (228 aa)) is pyrophosphorylase. UDP-N-acetyl-alpha-D-glucosamine-binding positions include 10–13 (LAAG), Lys24, Gln75, 80–81 (GT), 102–104 (YGD), Gly138, Glu153, Asn168, and Asn226. Mg(2+) is bound at residue Asp104. Asn226 lines the Mg(2+) pocket. The interval 229-249 (QQLAQLERKWQAKLVEDLQVQ) is linker. Residues 250–455 (GVQFADPNRV…DNYQRPEKKK (206 aa)) form an N-acetyltransferase region. UDP-N-acetyl-alpha-D-glucosamine contacts are provided by Arg332 and Lys350. The active-site Proton acceptor is the His362. Residues Tyr365 and Asn376 each coordinate UDP-N-acetyl-alpha-D-glucosamine. Residues Ala379, 385 to 386 (NY), Ala422, and Arg439 contribute to the acetyl-CoA site.

It in the N-terminal section; belongs to the N-acetylglucosamine-1-phosphate uridyltransferase family. This sequence in the C-terminal section; belongs to the transferase hexapeptide repeat family. In terms of assembly, homotrimer. Requires Mg(2+) as cofactor.

Its subcellular location is the cytoplasm. The catalysed reaction is alpha-D-glucosamine 1-phosphate + acetyl-CoA = N-acetyl-alpha-D-glucosamine 1-phosphate + CoA + H(+). It catalyses the reaction N-acetyl-alpha-D-glucosamine 1-phosphate + UTP + H(+) = UDP-N-acetyl-alpha-D-glucosamine + diphosphate. The protein operates within nucleotide-sugar biosynthesis; UDP-N-acetyl-alpha-D-glucosamine biosynthesis; N-acetyl-alpha-D-glucosamine 1-phosphate from alpha-D-glucosamine 6-phosphate (route II): step 2/2. It functions in the pathway nucleotide-sugar biosynthesis; UDP-N-acetyl-alpha-D-glucosamine biosynthesis; UDP-N-acetyl-alpha-D-glucosamine from N-acetyl-alpha-D-glucosamine 1-phosphate: step 1/1. Its pathway is bacterial outer membrane biogenesis; LPS lipid A biosynthesis. Catalyzes the last two sequential reactions in the de novo biosynthetic pathway for UDP-N-acetylglucosamine (UDP-GlcNAc). The C-terminal domain catalyzes the transfer of acetyl group from acetyl coenzyme A to glucosamine-1-phosphate (GlcN-1-P) to produce N-acetylglucosamine-1-phosphate (GlcNAc-1-P), which is converted into UDP-GlcNAc by the transfer of uridine 5-monophosphate (from uridine 5-triphosphate), a reaction catalyzed by the N-terminal domain. This chain is Bifunctional protein GlmU, found in Psychrobacter sp. (strain PRwf-1).